We begin with the raw amino-acid sequence, 148 residues long: D-aminoacyl-tRNA deacylase (148 aa).

A Gly-cisPro motif, important for rejection of L-amino acids motif is present at residues 137–138 (GP).

This sequence belongs to the DTD family. As to quaternary structure, homodimer.

Its subcellular location is the cytoplasm. The catalysed reaction is glycyl-tRNA(Ala) + H2O = tRNA(Ala) + glycine + H(+). The enzyme catalyses a D-aminoacyl-tRNA + H2O = a tRNA + a D-alpha-amino acid + H(+). Functionally, an aminoacyl-tRNA editing enzyme that deacylates mischarged D-aminoacyl-tRNAs. Also deacylates mischarged glycyl-tRNA(Ala), protecting cells against glycine mischarging by AlaRS. Acts via tRNA-based rather than protein-based catalysis; rejects L-amino acids rather than detecting D-amino acids in the active site. By recycling D-aminoacyl-tRNA to D-amino acids and free tRNA molecules, this enzyme counteracts the toxicity associated with the formation of D-aminoacyl-tRNA entities in vivo and helps enforce protein L-homochirality. This is D-aminoacyl-tRNA deacylase from Enterococcus faecalis (strain ATCC 700802 / V583).